The chain runs to 505 residues: Zealexin A1 synthase (505 aa).

A helical membrane pass occupies residues 7-26 (IAVGTVAVVAVLSKLKSAVT). C442 is a binding site for heme.

This sequence belongs to the cytochrome P450 family. Heme serves as cofactor.

The protein resides in the membrane. It carries out the reaction (S)-beta-macrocarpene + 3 reduced [NADPH--hemoprotein reductase] + 3 O2 = zealexin A1 + 3 oxidized [NADPH--hemoprotein reductase] + 4 H2O + 4 H(+). Its function is as follows. Involved in production of the antifungal phytoalexin zealexin A1. The enzyme sequentially oxidizes(S)-beta-macrocarpene via alcohol and aldehyde intermediates to form zealexin A1, a maize phytoalexin that provides biochemical protection against fungal infection. This Zea mays (Maize) protein is Zealexin A1 synthase.